The chain runs to 642 residues: Conserved oligomeric Golgi complex subunit 6 (642 aa).

The protein belongs to the COG6 family. As to quaternary structure, component of the conserved oligomeric Golgi complex which is composed of eight different subunits and is required for normal Golgi morphology and localization.

The protein localises to the golgi apparatus membrane. Its function is as follows. Required for normal Golgi function. This is Conserved oligomeric Golgi complex subunit 6 (cogc-6) from Caenorhabditis elegans.